The chain runs to 156 residues: Small ribosomal subunit protein uS7 (156 aa).

This sequence belongs to the universal ribosomal protein uS7 family. Part of the 30S ribosomal subunit. Contacts proteins S9 and S11.

In terms of biological role, one of the primary rRNA binding proteins, it binds directly to 16S rRNA where it nucleates assembly of the head domain of the 30S subunit. Is located at the subunit interface close to the decoding center, probably blocks exit of the E-site tRNA. The chain is Small ribosomal subunit protein uS7 from Bordetella petrii (strain ATCC BAA-461 / DSM 12804 / CCUG 43448).